Here is a 114-residue protein sequence, read N- to C-terminus: T cell receptor beta variable 5-4 (114 aa).

Residues 1–21 (MGPGLLCWALLCLLGAGSVET) form the signal peptide. Residues 22–114 (GVTQSPTHLI…SALYLCASSL (93 aa)) form the Ig-like domain. Cysteine 42 and cysteine 110 are oxidised to a cystine. An N-linked (GlcNAc...) asparagine glycan is attached at asparagine 90.

In terms of assembly, alpha-beta TR is a heterodimer composed of an alpha and beta chain; disulfide-linked. The alpha-beta TR is associated with the transmembrane signaling CD3 coreceptor proteins to form the TR-CD3 (TcR or TCR). The assembly of alpha-beta TR heterodimers with CD3 occurs in the endoplasmic reticulum where a single alpha-beta TR heterodimer associates with one CD3D-CD3E heterodimer, one CD3G-CD3E heterodimer and one CD247 homodimer forming a stable octameric structure. CD3D-CD3E and CD3G-CD3E heterodimers preferentially associate with TR alpha and TR beta chains, respectively. The association of the CD247 homodimer is the last step of TcR assembly in the endoplasmic reticulum and is required for transport to the cell surface.

It is found in the cell membrane. V region of the variable domain of T cell receptor (TR) beta chain that participates in the antigen recognition. Alpha-beta T cell receptors are antigen specific receptors which are essential to the immune response and are present on the cell surface of T lymphocytes. Recognize peptide-major histocompatibility (MH) (pMH) complexes that are displayed by antigen presenting cells (APC), a prerequisite for efficient T cell adaptive immunity against pathogens. Binding of alpha-beta TR to pMH complex initiates TR-CD3 clustering on the cell surface and intracellular activation of LCK that phosphorylates the ITAM motifs of CD3G, CD3D, CD3E and CD247 enabling the recruitment of ZAP70. In turn ZAP70 phosphorylates LAT, which recruits numerous signaling molecules to form the LAT signalosome. The LAT signalosome propagates signal branching to three major signaling pathways, the calcium, the mitogen-activated protein kinase (MAPK) kinase and the nuclear factor NF-kappa-B (NF-kB) pathways, leading to the mobilization of transcription factors that are critical for gene expression and essential for T cell growth and differentiation. The T cell repertoire is generated in the thymus, by V-(D)-J rearrangement. This repertoire is then shaped by intrathymic selection events to generate a peripheral T cell pool of self-MH restricted, non-autoaggressive T cells. Post-thymic interaction of alpha-beta TR with the pMH complexes shapes TR structural and functional avidity. This chain is T cell receptor beta variable 5-4, found in Homo sapiens (Human).